Here is a 367-residue protein sequence, read N- to C-terminus: Chorismate synthase (367 aa).

Arg48 is an NADP(+) binding site. FMN-binding positions include Arg125–Ser127, Asn238–Ala239, Gly278, Lys293–Ser297, and Arg319.

It belongs to the chorismate synthase family. As to quaternary structure, homotetramer. Requires FMNH2 as cofactor.

It carries out the reaction 5-O-(1-carboxyvinyl)-3-phosphoshikimate = chorismate + phosphate. It functions in the pathway metabolic intermediate biosynthesis; chorismate biosynthesis; chorismate from D-erythrose 4-phosphate and phosphoenolpyruvate: step 7/7. Its function is as follows. Catalyzes the anti-1,4-elimination of the C-3 phosphate and the C-6 proR hydrogen from 5-enolpyruvylshikimate-3-phosphate (EPSP) to yield chorismate, which is the branch point compound that serves as the starting substrate for the three terminal pathways of aromatic amino acid biosynthesis. This reaction introduces a second double bond into the aromatic ring system. The sequence is that of Chorismate synthase from Halorhodospira halophila (strain DSM 244 / SL1) (Ectothiorhodospira halophila (strain DSM 244 / SL1)).